The chain runs to 366 residues: Chorismate synthase (366 aa).

Residues Arg48 and Arg54 each contribute to the NADP(+) site. Residues 131 to 133 (RAS), 243 to 244 (NA), Gly288, 303 to 307 (KPTPS), and Arg329 each bind FMN.

The protein belongs to the chorismate synthase family. As to quaternary structure, homotetramer. Requires FMNH2 as cofactor.

It carries out the reaction 5-O-(1-carboxyvinyl)-3-phosphoshikimate = chorismate + phosphate. It participates in metabolic intermediate biosynthesis; chorismate biosynthesis; chorismate from D-erythrose 4-phosphate and phosphoenolpyruvate: step 7/7. Its function is as follows. Catalyzes the anti-1,4-elimination of the C-3 phosphate and the C-6 proR hydrogen from 5-enolpyruvylshikimate-3-phosphate (EPSP) to yield chorismate, which is the branch point compound that serves as the starting substrate for the three terminal pathways of aromatic amino acid biosynthesis. This reaction introduces a second double bond into the aromatic ring system. The polypeptide is Chorismate synthase (Bartonella quintana (strain Toulouse) (Rochalimaea quintana)).